A 152-amino-acid chain; its full sequence is Adenosine 5'-monophosphoramidase HNT1 (152 aa).

An HIT domain is found at 8 to 119 (IFCKIIKGEI…IPKKDEATGL (112 aa)). AMP is bound by residues 33 to 34 (DI), Asn93, 99 to 101 (HQV), and 106 to 108 (HFH). The Histidine triad motif motif lies at 104–108 (HVHFH). The active-site Tele-AMP-histidine intermediate is His106.

Belongs to the HINT family. In terms of assembly, homodimer. It depends on Mg(2+) as a cofactor.

The catalysed reaction is adenosine 5'-phosphoramidate + H2O = AMP + NH4(+). In terms of biological role, hydrolyzes adenosine 5'-monophosphoramidate substrates such as AMP-morpholidate, AMP-N-alanine methyl ester, AMP-alpha-acetyl lysine methyl ester and AMP-NH2. The sequence is that of Adenosine 5'-monophosphoramidase HNT1 from Candida albicans (strain SC5314 / ATCC MYA-2876) (Yeast).